We begin with the raw amino-acid sequence, 203 residues long: Hypoxanthine-guanine phosphoribosyltransferase (203 aa).

Diphosphate contacts are provided by Lys66 and Gly67. The Mg(2+) site is built by Glu122 and Asp123. The Proton acceptor role is filled by Asp126. GMP contacts are provided by residues Lys154, Phe175 to Val176, and Asp182. Arg188 contacts diphosphate.

The protein belongs to the purine/pyrimidine phosphoribosyltransferase family. Requires Mg(2+) as cofactor.

The protein localises to the cytoplasm. The enzyme catalyses IMP + diphosphate = hypoxanthine + 5-phospho-alpha-D-ribose 1-diphosphate. It catalyses the reaction GMP + diphosphate = guanine + 5-phospho-alpha-D-ribose 1-diphosphate. It functions in the pathway purine metabolism; IMP biosynthesis via salvage pathway; IMP from hypoxanthine: step 1/1. It participates in purine metabolism; GMP biosynthesis via salvage pathway; GMP from guanine: step 1/1. Purine salvage pathway enzyme that catalyzes the transfer of the ribosyl-5-phosphate group from 5-phospho-alpha-D-ribose 1-diphosphate (PRPP) to the N9 position of the 6-oxopurines hypoxanthine and guanine to form the corresponding ribonucleotides IMP (inosine 5'-monophosphate) and GMP (guanosine 5'-monophosphate), with the release of PPi. This Mycobacterium avium protein is Hypoxanthine-guanine phosphoribosyltransferase (hpt).